The sequence spans 464 residues: tRNA-2-methylthio-N(6)-dimethylallyladenosine synthase (464 aa).

The region spanning 19–135 (GSYWITTFGC…LENLLERVDL (117 aa)) is the MTTase N-terminal domain. [4Fe-4S] cluster-binding residues include Cys28, Cys64, Cys98, Cys170, Cys174, and Cys177. The region spanning 156 to 393 (RDSSICGWVN…NELVETTSRK (238 aa)) is the Radical SAM core domain. One can recognise a TRAM domain in the interval 396 to 464 (QRYLNNIESV…SFSLSGQIYK (69 aa)).

It belongs to the methylthiotransferase family. MiaB subfamily. As to quaternary structure, monomer. [4Fe-4S] cluster serves as cofactor.

Its subcellular location is the cytoplasm. The catalysed reaction is N(6)-dimethylallyladenosine(37) in tRNA + (sulfur carrier)-SH + AH2 + 2 S-adenosyl-L-methionine = 2-methylsulfanyl-N(6)-dimethylallyladenosine(37) in tRNA + (sulfur carrier)-H + 5'-deoxyadenosine + L-methionine + A + S-adenosyl-L-homocysteine + 2 H(+). Functionally, catalyzes the methylthiolation of N6-(dimethylallyl)adenosine (i(6)A), leading to the formation of 2-methylthio-N6-(dimethylallyl)adenosine (ms(2)i(6)A) at position 37 in tRNAs that read codons beginning with uridine. In Prochlorococcus marinus subsp. pastoris (strain CCMP1986 / NIES-2087 / MED4), this protein is tRNA-2-methylthio-N(6)-dimethylallyladenosine synthase.